Consider the following 85-residue polypeptide: uncharacterized protein (85 aa).

This sequence belongs to the YciI family.

This is an uncharacterized protein from Bacillus subtilis (strain 168).